The primary structure comprises 366 residues: Flagellar P-ring protein (366 aa).

Residues 1-20 form the signal peptide; that stretch reads MVIKFLSALILLLVTTAAQA.

It belongs to the FlgI family. The basal body constitutes a major portion of the flagellar organelle and consists of four rings (L,P,S, and M) mounted on a central rod.

It localises to the periplasm. The protein localises to the bacterial flagellum basal body. Assembles around the rod to form the L-ring and probably protects the motor/basal body from shearing forces during rotation. In Escherichia coli (strain UTI89 / UPEC), this protein is Flagellar P-ring protein.